The sequence spans 141 residues: Glutathione transferase FosA (141 aa).

The 114-residue stretch at Ser-4–Gly-117 folds into the VOC domain. The Mn(2+) site is built by His-7, His-67, and Glu-113.

Belongs to the fosfomycin resistance protein family. In terms of assembly, homodimer. Requires Mn(2+) as cofactor.

It is found in the cytoplasm. It catalyses the reaction RX + glutathione = an S-substituted glutathione + a halide anion + H(+). Requires the monovalent cation K(+) for optimal activity. Metalloglutathione transferase which confers resistance to fosfomycin by catalyzing the addition of glutathione to fosfomycin. This Serratia marcescens protein is Glutathione transferase FosA (fosA).